Here is a 72-residue protein sequence, read N- to C-terminus: Small ribosomal subunit protein bS18 (72 aa).

The protein belongs to the bacterial ribosomal protein bS18 family. As to quaternary structure, part of the 30S ribosomal subunit. Forms a tight heterodimer with protein bS6.

Its function is as follows. Binds as a heterodimer with protein bS6 to the central domain of the 16S rRNA, where it helps stabilize the platform of the 30S subunit. The sequence is that of Small ribosomal subunit protein bS18 from Francisella philomiragia subsp. philomiragia (strain ATCC 25017 / CCUG 19701 / FSC 153 / O#319-036).